The chain runs to 205 residues: Methyltransferase-like 26 B (205 aa).

Belongs to the UPF0585 family.

The polypeptide is Methyltransferase-like 26 B (Danio rerio (Zebrafish)).